A 116-amino-acid polypeptide reads, in one-letter code: Peptidyl-tRNA hydrolase (116 aa).

Belongs to the PTH2 family.

The protein resides in the cytoplasm. The enzyme catalyses an N-acyl-L-alpha-aminoacyl-tRNA + H2O = an N-acyl-L-amino acid + a tRNA + H(+). The natural substrate for this enzyme may be peptidyl-tRNAs which drop off the ribosome during protein synthesis. The protein is Peptidyl-tRNA hydrolase of Methanopyrus kandleri (strain AV19 / DSM 6324 / JCM 9639 / NBRC 100938).